Reading from the N-terminus, the 305-residue chain is Autophagy-related protein 27 (305 aa).

An N-terminal signal peptide occupies residues 1–22; sequence MARYKGLSILSLFAVFSSLASA. Topologically, residues 23–242 are lumenal; that stretch reads ELDCSNIKVD…EDGGSAPSGH (220 aa). One can recognise an MRH domain in the interval 24–231; the sequence is LDCSNIKVDG…EWKTKYACEN (208 aa). Cystine bridges form between Cys-26–Cys-66 and Cys-74–Cys-81. Residue Asn-58 is glycosylated (N-linked (GlcNAc...) asparagine). Asn-85 is a glycosylation site (N-linked (GlcNAc...) asparagine). A disulfide bridge links Cys-156 with Cys-229. The tract at residues 163-202 is disordered; sequence LEGLESPKPDGDKKKDGEKKDDDKKDNKDKEGKSKRDGEE. Residues 243–263 traverse the membrane as a helical segment; that stretch reads WGFFTWVIVLYVVLVSLPLLS. The Cytoplasmic portion of the chain corresponds to 264 to 305; that stretch reads ERVTNVRCHSQPVPVHFGLSDIRLVAQLQPVWSSRVGLASSQ.

This sequence belongs to the ATG27 family.

The protein localises to the cytoplasmic vesicle membrane. It localises to the golgi apparatus membrane. The protein resides in the mitochondrion membrane. Its subcellular location is the preautophagosomal structure membrane. Its function is as follows. Effector of phosphatidylinositol 3-phosphate kinase signaling. Regulates the cytoplasm to vacuole transport (Cvt) vesicle formation. Plays a role in ATG protein retrieval from the pre-autophagosomal structure (PAS). This Arthroderma benhamiae (strain ATCC MYA-4681 / CBS 112371) (Trichophyton mentagrophytes) protein is Autophagy-related protein 27.